A 168-amino-acid polypeptide reads, in one-letter code: Zinc-finger homeodomain protein 14 (168 aa).

The ZF-HD dimerization-type; degenerate zinc-finger motif lies at 7–51 (YRECMRNHAAKLGSYAIDGCREYSQPSTGDLCVACGCHRSYHRRI). Positions 76 to 103 (ARLKWKTAEERNEEEEDDTEETSTEEKM) form a coiled coil. A disordered region spans residues 82–112 (TAEERNEEEEDDTEETSTEEKMTVQRRRKSK). The segment covering 86–98 (RNEEEEDDTEETS) has biased composition (acidic residues). The homeobox DNA-binding region spans 106-168 (QRRRKSKFTA…WVNNNKKFYH (63 aa)).

In terms of assembly, homo- and heterodimer with other ZFHD proteins. Interacts with ZHD11. In terms of tissue distribution, mostly expressed in flowers and stems.

It is found in the nucleus. Putative transcription factor. The sequence is that of Zinc-finger homeodomain protein 14 (ZHD14) from Arabidopsis thaliana (Mouse-ear cress).